The sequence spans 298 residues: Adaptation to cold protein C (298 aa).

As to quaternary structure, interacts with the C-terminal extension of AtcJ. Also interacts with AtcB, but not with AtcA.

Interaction with AtcJ stabilizes AtcC. Functionally, involved in cold adaptation. The protein is Adaptation to cold protein C of Shewanella oneidensis (strain ATCC 700550 / JCM 31522 / CIP 106686 / LMG 19005 / NCIMB 14063 / MR-1).